Here is a 270-residue protein sequence, read N- to C-terminus: Sec-independent protein translocase protein TatC (270 aa).

A run of 6 helical transmembrane segments spans residues 35–55 (LILSVVFLAVGMVIAFTYRVQ), 93–113 (AFWAGLTLALPFIVWQIWAFI), 124–144 (WGLPFILGAGFAFAAGVVFGY), 176–196 (VVTFLVAFGVAFELPILAVIL), 209–229 (QGWRFALIGIMILAAVITPTP), and 231–251 (PANMALVAVPLYALYELGVVL).

The protein belongs to the TatC family. As to quaternary structure, forms a complex with TatA.

The protein resides in the cell membrane. In terms of biological role, part of the twin-arginine translocation (Tat) system that transports large folded proteins containing a characteristic twin-arginine motif in their signal peptide across membranes. The polypeptide is Sec-independent protein translocase protein TatC (Deinococcus radiodurans (strain ATCC 13939 / DSM 20539 / JCM 16871 / CCUG 27074 / LMG 4051 / NBRC 15346 / NCIMB 9279 / VKM B-1422 / R1)).